The chain runs to 124 residues: Acidic phospholipase A2 (124 aa).

Disulfide bonds link Cys26–Cys116, Cys28–Cys44, Cys43–Cys95, Cys49–Cys124, Cys50–Cys88, Cys57–Cys81, and Cys75–Cys86. Tyr27, Gly29, and Gly31 together coordinate Ca(2+). His47 is an active-site residue. Position 48 (Asp48) interacts with Ca(2+). Asp89 is a catalytic residue.

The protein belongs to the phospholipase A2 family. Group II subfamily. D49 sub-subfamily. In terms of assembly, monomer. Ca(2+) is required as a cofactor. In terms of tissue distribution, expressed by the venom gland.

The protein resides in the secreted. The enzyme catalyses a 1,2-diacyl-sn-glycero-3-phosphocholine + H2O = a 1-acyl-sn-glycero-3-phosphocholine + a fatty acid + H(+). Snake venom phospholipase A2 (PLA2) that acts in vivo as an anti-thrombotic agent. Inhibits platelet aggregation induced by ADP, arachidonic acid, and thrombin. PLA2 catalyzes the calcium-dependent hydrolysis of the 2-acyl groups in 3-sn-phosphoglycerides. The chain is Acidic phospholipase A2 from Gloydius halys (Chinese water mocassin).